A 924-amino-acid polypeptide reads, in one-letter code: Isoleucine--tRNA ligase (924 aa).

Residues Pro-57–His-67 carry the 'HIGH' region motif. Glu-552 provides a ligand contact to L-isoleucyl-5'-AMP. The 'KMSKS' region signature appears at Lys-593–Ser-597. Lys-596 is an ATP binding site. Residues Cys-891, Cys-894, Cys-911, and Cys-914 each coordinate Zn(2+).

The protein belongs to the class-I aminoacyl-tRNA synthetase family. IleS type 1 subfamily. Monomer. The cofactor is Zn(2+).

The protein resides in the cytoplasm. The enzyme catalyses tRNA(Ile) + L-isoleucine + ATP = L-isoleucyl-tRNA(Ile) + AMP + diphosphate. Its function is as follows. Catalyzes the attachment of isoleucine to tRNA(Ile). As IleRS can inadvertently accommodate and process structurally similar amino acids such as valine, to avoid such errors it has two additional distinct tRNA(Ile)-dependent editing activities. One activity is designated as 'pretransfer' editing and involves the hydrolysis of activated Val-AMP. The other activity is designated 'posttransfer' editing and involves deacylation of mischarged Val-tRNA(Ile). This is Isoleucine--tRNA ligase from Geobacillus thermodenitrificans (strain NG80-2).